The primary structure comprises 265 residues: 4-hydroxy-tetrahydrodipicolinate reductase (265 aa).

NAD(+) is bound by residues 7 to 12 (GASGRM) and D33. Residue R34 coordinates NADP(+). NAD(+) is bound by residues 96 to 98 (GTT) and 120 to 123 (AANM). H153 functions as the Proton donor/acceptor in the catalytic mechanism. H154 lines the (S)-2,3,4,5-tetrahydrodipicolinate pocket. K157 (proton donor) is an active-site residue. 163-164 (GT) contacts (S)-2,3,4,5-tetrahydrodipicolinate.

The protein belongs to the DapB family.

Its subcellular location is the cytoplasm. It carries out the reaction (S)-2,3,4,5-tetrahydrodipicolinate + NAD(+) + H2O = (2S,4S)-4-hydroxy-2,3,4,5-tetrahydrodipicolinate + NADH + H(+). The catalysed reaction is (S)-2,3,4,5-tetrahydrodipicolinate + NADP(+) + H2O = (2S,4S)-4-hydroxy-2,3,4,5-tetrahydrodipicolinate + NADPH + H(+). Its pathway is amino-acid biosynthesis; L-lysine biosynthesis via DAP pathway; (S)-tetrahydrodipicolinate from L-aspartate: step 4/4. Catalyzes the conversion of 4-hydroxy-tetrahydrodipicolinate (HTPA) to tetrahydrodipicolinate. This chain is 4-hydroxy-tetrahydrodipicolinate reductase, found in Burkholderia vietnamiensis (strain G4 / LMG 22486) (Burkholderia cepacia (strain R1808)).